Here is a 171-residue protein sequence, read N- to C-terminus: 6,7-dimethyl-8-ribityllumazine synthase (171 aa).

Residues F24, 58–60 (ALE), and 82–84 (AVI) contribute to the 5-amino-6-(D-ribitylamino)uracil site. 87-88 (ET) contacts (2S)-2-hydroxy-3-oxobutyl phosphate. Catalysis depends on H90, which acts as the Proton donor. N115 provides a ligand contact to 5-amino-6-(D-ribitylamino)uracil. R129 serves as a coordination point for (2S)-2-hydroxy-3-oxobutyl phosphate. The interval 150-171 (ALDQLGDDEDEEEDEEDEEERA) is disordered. The span at 154 to 171 (LGDDEDEEEDEEDEEERA) shows a compositional bias: acidic residues.

The protein belongs to the DMRL synthase family.

The enzyme catalyses (2S)-2-hydroxy-3-oxobutyl phosphate + 5-amino-6-(D-ribitylamino)uracil = 6,7-dimethyl-8-(1-D-ribityl)lumazine + phosphate + 2 H2O + H(+). Its pathway is cofactor biosynthesis; riboflavin biosynthesis; riboflavin from 2-hydroxy-3-oxobutyl phosphate and 5-amino-6-(D-ribitylamino)uracil: step 1/2. Catalyzes the formation of 6,7-dimethyl-8-ribityllumazine by condensation of 5-amino-6-(D-ribitylamino)uracil with 3,4-dihydroxy-2-butanone 4-phosphate. This is the penultimate step in the biosynthesis of riboflavin. The protein is 6,7-dimethyl-8-ribityllumazine synthase of Burkholderia ambifaria (strain MC40-6).